A 500-amino-acid chain; its full sequence is Ribose import ATP-binding protein RbsA (500 aa).

ABC transporter domains lie at 6–242 (LALS…VGRK) and 252–495 (AQQG…VGRN). ATP is bound at residue 38–45 (GENGAGKS).

Belongs to the ABC transporter superfamily. Ribose importer (TC 3.A.1.2.1) family. In terms of assembly, the complex is composed of an ATP-binding protein (RbsA), two transmembrane proteins (RbsC) and a solute-binding protein (RbsB).

It localises to the cell inner membrane. The enzyme catalyses D-ribose(out) + ATP + H2O = D-ribose(in) + ADP + phosphate + H(+). Functionally, part of the ABC transporter complex RbsABC involved in ribose import. Responsible for energy coupling to the transport system. The sequence is that of Ribose import ATP-binding protein RbsA from Vibrio cholerae serotype O1 (strain ATCC 39315 / El Tor Inaba N16961).